A 302-amino-acid polypeptide reads, in one-letter code: Acetylglutamate kinase (302 aa).

Substrate is bound by residues 68–69, arginine 90, and asparagine 194; that span reads GG.

Belongs to the acetylglutamate kinase family. ArgB subfamily.

The protein localises to the cytoplasm. It carries out the reaction N-acetyl-L-glutamate + ATP = N-acetyl-L-glutamyl 5-phosphate + ADP. Its pathway is amino-acid biosynthesis; L-arginine biosynthesis; N(2)-acetyl-L-ornithine from L-glutamate: step 2/4. In terms of biological role, catalyzes the ATP-dependent phosphorylation of N-acetyl-L-glutamate. This is Acetylglutamate kinase from Acinetobacter baumannii (strain AB307-0294).